A 216-amino-acid chain; its full sequence is Gamma-glutamylcyclotransferase 2-1 (216 aa).

5–10 (VFGYGS) serves as a coordination point for substrate. Residue E87 is the Proton acceptor of the active site.

Belongs to the gamma-glutamylcyclotransferase family. Requires Mn(2+) as cofactor. In terms of tissue distribution, expressed in the central vascular bundle of roots, leaf veins, hydathodes, cauline leaves, shoot apex, sepal veins, flower receptacles and developing seeds.

Its subcellular location is the cytoplasm. The catalysed reaction is an alpha-(gamma-L-glutamyl)-L-amino acid = 5-oxo-L-proline + an L-alpha-amino acid. Its function is as follows. Catalyzes the formation of 5-oxoproline from gamma-glutamyl dipeptides and plays a significant role in glutathione (GSH) homeostasis. Converts both GSH and gamma-glutamyl-L-alanine to 5-oxoproline in vitro. Plays a role in detoxification of heavy metals and metalloids by recycling glutamate and maintaining GSH homeostasis. The protein is Gamma-glutamylcyclotransferase 2-1 of Arabidopsis thaliana (Mouse-ear cress).